A 444-amino-acid chain; its full sequence is N-succinylarginine dihydrolase (444 aa).

Substrate is bound by residues 19-28 (AGLSFGNVAS), asparagine 110, and 137-138 (HR). Residue glutamate 174 is part of the active site. Arginine 214 serves as a coordination point for substrate. Histidine 250 is an active-site residue. 2 residues coordinate substrate: aspartate 252 and asparagine 362. Residue cysteine 368 is the Nucleophile of the active site.

This sequence belongs to the succinylarginine dihydrolase family. In terms of assembly, homodimer.

The enzyme catalyses N(2)-succinyl-L-arginine + 2 H2O + 2 H(+) = N(2)-succinyl-L-ornithine + 2 NH4(+) + CO2. It functions in the pathway amino-acid degradation; L-arginine degradation via AST pathway; L-glutamate and succinate from L-arginine: step 2/5. Catalyzes the hydrolysis of N(2)-succinylarginine into N(2)-succinylornithine, ammonia and CO(2). This chain is N-succinylarginine dihydrolase, found in Shewanella oneidensis (strain ATCC 700550 / JCM 31522 / CIP 106686 / LMG 19005 / NCIMB 14063 / MR-1).